The sequence spans 213 residues: Adenylate kinase (213 aa).

Position 10 to 15 (10 to 15 (GAGKGT)) interacts with ATP. The tract at residues 30–59 (STGDMFRAAMANQTEMGLLAKSYIDKGDLV) is NMP. Residues Thr-31, Arg-36, 57-59 (DLV), 86-89 (GYPR), and Gln-93 each bind AMP. An LID region spans residues 127–160 (GRIIHKKTGETFHKIFNPPAGDYDENDYYQREDD). ATP is bound by residues Arg-128 and 137 to 138 (TF). Arg-157 and Arg-168 together coordinate AMP. Gln-196 contributes to the ATP binding site.

The protein belongs to the adenylate kinase family. As to quaternary structure, monomer.

The protein resides in the cytoplasm. The catalysed reaction is AMP + ATP = 2 ADP. It functions in the pathway purine metabolism; AMP biosynthesis via salvage pathway; AMP from ADP: step 1/1. Functionally, catalyzes the reversible transfer of the terminal phosphate group between ATP and AMP. Plays an important role in cellular energy homeostasis and in adenine nucleotide metabolism. In Streptococcus uberis (strain ATCC BAA-854 / 0140J), this protein is Adenylate kinase.